The chain runs to 548 residues: T-complex protein 1 subunit theta (548 aa).

Ala-2 carries the N-acetylalanine modification. ADP is bound by residues Tyr-47 and Gly-48. Asp-99 is a Mg(2+) binding site. 9 residues coordinate ADP: Gly-100, Thr-101, Asn-102, Phe-103, Met-169, Ser-170, Lys-171, Gly-412, and Asp-499. ATP is bound by residues Gly-100, Thr-101, and Asn-102. ATP contacts are provided by Ser-170, Lys-171, Gly-412, Asp-499, and Lys-504. Tyr-505 is modified (phosphotyrosine). The disordered stretch occupies residues 529–548 (PAGGPKPPSGKKDWDEDQND).

As to quaternary structure, component of the chaperonin-containing T-complex (TRiC), a hexadecamer composed of two identical back-to-back stacked rings enclosing a protein folding chamber. Each ring is made up of eight different subunits: TCP1/CCT1, CCT2, CCT3, CCT4, CCT5, CCT6A/CCT6, CCT7, CCT8.

It is found in the cytoplasm. It localises to the cytoskeleton. The protein localises to the microtubule organizing center. Its subcellular location is the centrosome. The protein resides in the cilium basal body. The enzyme catalyses ATP + H2O = ADP + phosphate + H(+). Functionally, component of the chaperonin-containing T-complex (TRiC), a molecular chaperone complex that assists the folding of actin, tubulin and other proteins upon ATP hydrolysis. This is T-complex protein 1 subunit theta from Gallus gallus (Chicken).